We begin with the raw amino-acid sequence, 592 residues long: Sodium- and chloride-dependent transporter XTRP3A (592 aa).

Topologically, residues 1 to 7 are cytoplasmic; sequence MEKARPQ. A helical transmembrane segment spans residues 8 to 28; sequence WGHPLQFVFACISYAVGLGNV. Over 29–42 the chain is Extracellular; sequence WRFPYLCQMYGGGS. The chain crosses the membrane as a helical span at residues 43–63; that stretch reads FLVPYIIMLIVEGMPLLYLEL. Topologically, residues 64-79 are cytoplasmic; sequence AVGQRMRQGSIGAWRT. A helical transmembrane segment spans residues 80–100; sequence ISPYLSGVGVASVVVSFFLSM. Residues 101-165 lie on the Extracellular side of the membrane; it reads YYNVINAWGF…ISPSIQENGG (65 aa). N-linked (GlcNAc...) asparagine glycosylation is present at asparagine 131. The chain crosses the membrane as a helical span at residues 166 to 186; it reads VQWEPALCLTLAWLMVYLCIL. Over 187-194 the chain is Cytoplasmic; sequence RGTESTGK. The helical transmembrane segment at 195 to 215 threads the bilayer; that stretch reads VVYFTASMPYCVLIIYLVRGL. Topologically, residues 216–241 are extracellular; it reads TLHGATNGLMYMFTPKMEQLANPKAW. The chain crosses the membrane as a helical span at residues 242 to 262; the sequence is INAATQIFFSLGLGFGSLIAF. At 263–276 the chain is on the cytoplasmic side; the sequence is ASYNEPSNNCQKHA. Residues 277-297 form a helical membrane-spanning segment; it reads IIVSIINSSTSIFASIVTFSI. Residues 298–389 lie on the Extracellular side of the membrane; the sequence is YGFKATFNYE…EAIKNMEVSQ (92 aa). Residues 390 to 410 form a helical membrane-spanning segment; the sequence is LWSVLYFFMLLMLGIGSMLGN. Residues 411-431 lie on the Cytoplasmic side of the membrane; sequence TAAILTPLTDSKVISSYLPKE. Residues 432–452 form a helical membrane-spanning segment; that stretch reads AISGLVCLINCAVGMVFTMEA. At 453–465 the chain is on the extracellular side; it reads GNYWFDIFNDYAA. Residues 466-486 form a helical membrane-spanning segment; the sequence is TLSLLLIVLVETIAVCYVYGL. The Cytoplasmic segment spans residues 487 to 504; it reads KRFESDLRAMTGRTLSWY. The chain crosses the membrane as a helical span at residues 505–525; that stretch reads WKVMWAFVSPLLIVGLFIFYL. Over 526-554 the chain is Extracellular; it reads SDYILTGTLQYQAWDATQGQLVTKDYPPH. The helical transmembrane segment at 555–575 threads the bilayer; the sequence is ALAVIGLLVASSTMCIPLVAL. Over 576–592 the chain is Cytoplasmic; sequence GTFIRNRLKRGGSAPVA.

Belongs to the sodium:neurotransmitter symporter (SNF) (TC 2.A.22) family. SLC6A20 subfamily. Expressed in brain, kidney, small intestine, thymus, spleen and lung. In the brain, expressed in cerebellum, cortex and brain stem. Not detected in liver, muscle or heart. In brain, widespread in various regions, including the meninges, choroid plexus, cortex, hippocampus and thalamus.

The protein localises to the apical cell membrane. It catalyses the reaction L-proline(out) + chloride(out) + 2 Na(+)(out) = L-proline(in) + chloride(in) + 2 Na(+)(in). It carries out the reaction 4-hydroxy-L-proline(out) + chloride(out) + 2 Na(+)(out) = 4-hydroxy-L-proline(in) + chloride(in) + 2 Na(+)(in). The enzyme catalyses 2-methyl-2-(methylamino)propanoate(out) + chloride(out) + 2 Na(+)(out) = 2-methyl-2-(methylamino)propanoate(in) + chloride(in) + 2 Na(+)(in). The catalysed reaction is L-pipecolate(out) + chloride(out) + 2 Na(+)(out) = L-pipecolate(in) + chloride(in) + 2 Na(+)(in). It catalyses the reaction glycine betaine(out) + chloride(out) + 2 Na(+)(out) = glycine betaine(in) + chloride(in) + 2 Na(+)(in). It carries out the reaction glycine(out) + chloride(out) + 2 Na(+)(out) = glycine(in) + chloride(in) + 2 Na(+)(in). In terms of biological role, mediates the Na(+)- and Cl(-)-dependent uptake of imino acids such as L-proline, N-methyl-L-proline and pipecolate as well as N-methylated amino acids. Also transports glycine, regulates proline and glycine homeostasis in the brain playing a role in the modulation of NMDAR currents. This Mus musculus (Mouse) protein is Sodium- and chloride-dependent transporter XTRP3A.